The sequence spans 168 residues: MVELESQEAVTVASTADIAVDVSLRLLAAATSLAAAVVVAANHQQRWGIRVDFTLFQVWIGFVAVNLVCTVYAAATAAAAARKAMGRWWLHHADAVVVNLEAAATAGAGAIGSIAMWGNEASGWYAVCRLYRRYCNAGAAALALSLAAVLLLGVACARSRYPKMPPTT.

At 1–17 (MVELESQEAVTVASTAD) the chain is on the cytoplasmic side. The chain crosses the membrane as a helical span at residues 18–38 (IAVDVSLRLLAAATSLAAAVV). Residues 39–54 (VAANHQQRWGIRVDFT) lie on the Extracellular side of the membrane. Residues 55-75 (LFQVWIGFVAVNLVCTVYAAA) traverse the membrane as a helical segment. Topologically, residues 76 to 95 (TAAAAARKAMGRWWLHHADA) are cytoplasmic. The chain crosses the membrane as a helical span at residues 96–116 (VVVNLEAAATAGAGAIGSIAM). Residues 117–136 (WGNEASGWYAVCRLYRRYCN) lie on the Extracellular side of the membrane. The helical transmembrane segment at 137–157 (AGAAALALSLAAVLLLGVACA) threads the bilayer. Over 158–168 (RSRYPKMPPTT) the chain is Cytoplasmic.

This sequence belongs to the Casparian strip membrane proteins (CASP) family. As to quaternary structure, homodimer and heterodimers.

Its subcellular location is the cell membrane. This is CASP-like protein UU-1 from Oryza sativa subsp. japonica (Rice).